Consider the following 287-residue polypeptide: Glutamate racemase (287 aa).

Polar residues predominate over residues 1–15; that stretch reads MATKPQDANTTSREA. Positions 1 to 25 are disordered; it reads MATKPQDANTTSREAITSKADSPPR. Substrate contacts are provided by residues 32 to 33 and 64 to 65; these read DS and YG. Cys-96 functions as the Proton donor/acceptor in the catalytic mechanism. Residue 97–98 coordinates substrate; the sequence is NT. The active-site Proton donor/acceptor is the Cys-208. 209 to 210 contacts substrate; that stretch reads TH.

Belongs to the aspartate/glutamate racemases family.

The catalysed reaction is L-glutamate = D-glutamate. It functions in the pathway cell wall biogenesis; peptidoglycan biosynthesis. Its function is as follows. Provides the (R)-glutamate required for cell wall biosynthesis. The polypeptide is Glutamate racemase (Yersinia pseudotuberculosis serotype O:3 (strain YPIII)).